Reading from the N-terminus, the 330-residue chain is GTPase Obg (330 aa).

Residues 1–159 enclose the Obg domain; sequence MQFIDQARIT…WPLQLELKLL (159 aa). An OBG-type G domain is found at 160-328; the sequence is AEVGIIGLPN…LLERVWKELG (169 aa). Residues 166 to 173, 191 to 195, 213 to 216, 280 to 283, and 309 to 311 contribute to the ATP site; these read GLPNAGKS, FTTLV, DIPG, NKQE, and SAA. Residues Ser-173 and Thr-193 each coordinate Mg(2+).

The protein belongs to the TRAFAC class OBG-HflX-like GTPase superfamily. OBG GTPase family. In terms of assembly, monomer. It depends on Mg(2+) as a cofactor.

The protein localises to the cytoplasm. Its function is as follows. An essential GTPase which binds GTP, GDP and possibly (p)ppGpp with moderate affinity, with high nucleotide exchange rates and a fairly low GTP hydrolysis rate. Plays a role in control of the cell cycle, stress response, ribosome biogenesis and in those bacteria that undergo differentiation, in morphogenesis control. In Parasynechococcus marenigrum (strain WH8102), this protein is GTPase Obg.